Here is a 125-residue protein sequence, read N- to C-terminus: C-X-C motif chemokine 9 (125 aa).

The signal sequence occupies residues 1 to 22; that stretch reads MKKSGVLFLLGIILLVLIGVQG. Disulfide bonds link cysteine 31/cysteine 58 and cysteine 33/cysteine 74. Positions 93–125 are disordered; the sequence is VSQKKKQKNGKKHQKKKVLKVRKSQRSRQKKTT. Residues 94–125 show a composition bias toward basic residues; the sequence is SQKKKQKNGKKHQKKKVLKVRKSQRSRQKKTT.

Belongs to the intercrine alpha (chemokine CxC) family.

Its subcellular location is the secreted. Cytokine that affects the growth, movement, or activation state of cells that participate in immune and inflammatory response. Chemotactic for activated T-cells. Binds to CXCR3. This Homo sapiens (Human) protein is C-X-C motif chemokine 9 (CXCL9).